A 258-amino-acid polypeptide reads, in one-letter code: UPF0246 protein HS_0482 (258 aa).

This sequence belongs to the UPF0246 family.

The protein is UPF0246 protein HS_0482 of Histophilus somni (strain 129Pt) (Haemophilus somnus).